We begin with the raw amino-acid sequence, 157 residues long: MKLSLMAAISKNGVIGNGPDIPWSAKGEQLLFKAITYNQWLLVGRKTFESMGALPNRKYAVVTRSSFTSSDENVLVFPSIDEALNHLKTITDHVIVSGGGEIYKSLIDKVDTLHISTIDIEPEGDVYFPEIPSSFRPVFSQDFVSNINYSYQIWQKG.

Residues 2–156 (KLSLMAAISK…INYSYQIWQK (155 aa)) form the DHFR domain.

It belongs to the dihydrofolate reductase family. In terms of assembly, homodimer.

It catalyses the reaction (6S)-5,6,7,8-tetrahydrofolate + NADP(+) = 7,8-dihydrofolate + NADPH + H(+). It functions in the pathway cofactor biosynthesis; tetrahydrofolate biosynthesis; 5,6,7,8-tetrahydrofolate from 7,8-dihydrofolate: step 1/1. Its function is as follows. Key enzyme in folate metabolism. Catalyzes an essential reaction for de novo glycine and purine synthesis, and for DNA precursor synthesis. In Escherichia coli, this protein is Dihydrofolate reductase type 15 (dhfrXV).